Reading from the N-terminus, the 410-residue chain is Diguanylate cyclase DgcM (410 aa).

2 PAS domains span residues 3-70 (THNF…NQHD) and 129-198 (GFYA…HLPG). Residues 199–251 (GHKPLNFVHKLADGSTRHVQTYAGPIEIYGDKLMLCIVHDITEQKRLEEQLEH) form the PAC domain. The 128-residue stretch at 283–410 (QDYSLLLIDT…NDGRNRVLAA (128 aa)) folds into the GGDEF domain. Asp-291 is a binding site for Mg(2+). Residues Asn-299, His-304, and Asp-308 each coordinate substrate. Residue Glu-334 participates in Mg(2+) binding. Glu-334 serves as the catalytic Proton acceptor.

In terms of assembly, forms homodimers and homotetramers. Interacts with PdeR and MlrA. Requires Mg(2+) as cofactor.

The enzyme catalyses 2 GTP = 3',3'-c-di-GMP + 2 diphosphate. The protein operates within purine metabolism; 3',5'-cyclic di-GMP biosynthesis. Its activity is regulated as follows. Activity is inhibited by the phosphodiesterase PdeR. Inhibition is relieved by high cellular c-di-GMP levels. Its function is as follows. Part of a signaling cascade that regulates curli biosynthesis. The cascade is composed of two cyclic-di-GMP (c-di-GMP) control modules, in which c-di-GMP controlled by the DgcE/PdeH pair (module I) regulates the activity of the DgcM/PdeR pair (module II), which in turn regulates activity of the transcription factor MlrA and expression of the master biofilm regulator csgD. DgcM stimulates activity of MlrA by direct interaction, leading to the transcription of csgD. It also catalyzes the synthesis of c-di-GMP via the condensation of 2 GTP molecules, which contributes to the c-di-GMP pool generated by module I in a positive feedback loop. Production of c-di-GMP contributes to but is not essential for MlrA activation. The protein is Diguanylate cyclase DgcM of Escherichia coli (strain K12).